A 1230-amino-acid chain; its full sequence is Potassium channel subfamily T member 1 (1230 aa).

The tract at residues 1-37 (MARAKLPRSPSEGKAGPGGAPAGAAAPEEPHGLSPLL) is disordered. Over 1-93 (MARAKLPRSP…LFFIKNQRSS (93 aa)) the chain is Cytoplasmic. Residues 94-126 (LRIRLFNFSLKLLTCLLYIVRVLLDDPALGIGC) traverse the membrane as a helical segment. Topologically, residues 127 to 153 (WGCPKQNYSFNDSSSEINWAPILWVER) are extracellular. N133 and N137 each carry an N-linked (GlcNAc...) asparagine glycan. Residues 154–178 (KMTLWAIQVIVAIISFLETMLLIYL) traverse the membrane as a helical segment. The Cytoplasmic segment spans residues 179–192 (SYKGNIWEQIFRVS). Residues 193 to 208 (FVLEMINTLPFIITIF) traverse the membrane as a helical segment. Residues 209 to 215 (WPPLRNL) lie on the Extracellular side of the membrane. A helical transmembrane segment spans residues 216–233 (FIPVFLNCWLAKHALENM). Residues 234-246 (INDFHRAILRTQS) lie on the Cytoplasmic side of the membrane. A helical membrane pass occupies residues 247–274 (AMFNQVLILFCTLLCLVFTGTCGIQHLE). At 275-281 (RAGENLS) the chain is on the extracellular side. Residues 282–302 (LLTSFYFCIVTFSTVGYGDVT) constitute an intramembrane region (pore-forming). V296 and G297 together coordinate K(+). Residues 303 to 304 (PK) are Extracellular-facing. Residues 305-338 (IWPSQLLVVIMICVALVVLPLQFEELVYLWMERQ) traverse the membrane as a helical segment. Over 339–1230 (KSGGNYSRHR…NPETRDETQL (892 aa)) the chain is Cytoplasmic. An RCK N-terminal 1 domain is found at 352 to 488 (EKHVVLCVSS…FHVKFADHVV (137 aa)). L513, H516, S538, and N540 together coordinate Na(+). Residues 660 to 689 (TEHRPTQSGGGGGGSKLALPTENGSGSRRP) form a disordered region. 2 residues coordinate Zn(2+): C758 and C759. The K(+) site is built by R761 and K764. Residues R761 and K764 each coordinate Na(+). C766 and H768 together coordinate Zn(2+). K(+)-binding residues include N769, Y771, Y777, and G778. Position 771 (Y771) interacts with Na(+). F779 is a binding site for Na(+). Positions 781–921 (NKLIIVSAET…QFRAKDSYSL (141 aa)) constitute an RCK N-terminal 2 domain. K(+) is bound by residues S787, L818, D820, G842, and D865. 2 disordered regions span residues 1048-1078 (EVKG…EHPL) and 1204-1230 (SSSQ…ETQL). Residues 1057 to 1072 (AGTGGSSQGRHTGGGD) are compositionally biased toward gly residues. A compositionally biased stretch (low complexity) spans 1204–1219 (SSSQSRKSSCSHKLSS).

This sequence belongs to the potassium channel family. Calcium-activated (TC 1.A.1.3) subfamily. KCa4.1/KCNT1 sub-subfamily. In terms of assembly, homotetramer; which constitutes the Na(+)-activated K(+) channel. Interacts with KCNT2; these heterodimer channels differ from the homomers in their unitary conductance, kinetic behavior, subcellular localization, and response to activation of protein kinase C. Interacts (via C-terminus) with FMR1; this interaction alters gating properties of KCNT1. Interacts with CRBN via its cytoplasmic C-terminus. Phosphorylated by protein kinase C. Phosphorylation of the C-terminal domain increases channel activity. As to expression, highest expression in liver, brain and spinal cord. Lowest expression in skeletal muscle.

It is found in the cell membrane. The catalysed reaction is K(+)(in) = K(+)(out). Its activity is regulated as follows. Activated by high intracellular Na(+). In addition to activation by Na(+), is cooperatively activated by intracellular Cl(-) levels. Inhibited by Zn(2+). Activated upon stimulation of G-protein coupled receptors, such as CHRM1 and GRIA1. Functionally, sodium-activated K(+) channel. Acts as an important mediator of neuronal membrane excitability. Contributes to the delayed outward currents. Regulates neuronal bursting in sensory neurons. Contributes to synaptic development and plasticity. This is Potassium channel subfamily T member 1 from Homo sapiens (Human).